The following is a 30-amino-acid chain: Chassatide C3 (30 aa).

The segment at residues 1-30 (GIPCGESCVWIPCISSALGCSCKNKVCYRN) is a cross-link (cyclopeptide (Gly-Asn)). 3 disulfide bridges follow: Cys4-Cys20, Cys8-Cys22, and Cys13-Cys27.

This is a cyclic peptide. Expressed in fruit, pedicel, stem and root but not in leaf (at protein level).

Its function is as follows. Probably participates in a plant defense mechanism. The chain is Chassatide C3 from Chassalia chartacea (Chassalia curviflora).